The primary structure comprises 542 residues: Membrane protein insertase YidC (542 aa).

The helical transmembrane segment at 5–25 (TLLAVILSITVFYVFSLLFAP) threads the bilayer. The tract at residues 33–64 (ESTGQAVSAPVSAGQPVAGGVQPSASAPSLPA) is disordered. Residues 54 to 64 (QPSASAPSLPA) are compositionally biased toward low complexity. The next 5 membrane-spanning stretches (helical) occupy residues 323 to 343 (LDLG…KYFY), 345 to 365 (YVGN…ALFF), 419 to 439 (LPML…MFSI), 463 to 483 (MLGL…TMFI), and 500 to 520 (MLAL…GLVL).

This sequence belongs to the OXA1/ALB3/YidC family. Type 1 subfamily. In terms of assembly, interacts with the Sec translocase complex via SecD. Specifically interacts with transmembrane segments of nascent integral membrane proteins during membrane integration.

It is found in the cell inner membrane. Its function is as follows. Required for the insertion and/or proper folding and/or complex formation of integral membrane proteins into the membrane. Involved in integration of membrane proteins that insert both dependently and independently of the Sec translocase complex, as well as at least some lipoproteins. Aids folding of multispanning membrane proteins. The protein is Membrane protein insertase YidC of Pelobacter propionicus (strain DSM 2379 / NBRC 103807 / OttBd1).